The sequence spans 320 residues: Ferrochelatase (320 aa).

H194 and E275 together coordinate Fe cation.

The protein belongs to the ferrochelatase family. In terms of assembly, monomer.

Its subcellular location is the cytoplasm. The catalysed reaction is heme b + 2 H(+) = protoporphyrin IX + Fe(2+). The protein operates within porphyrin-containing compound metabolism; protoheme biosynthesis; protoheme from protoporphyrin-IX: step 1/1. Functionally, catalyzes the ferrous insertion into protoporphyrin IX. This is Ferrochelatase from Salmonella agona (strain SL483).